The primary structure comprises 637 residues: Pentatricopeptide repeat-containing protein At1g12300, mitochondrial (637 aa).

A mitochondrion-targeting transit peptide spans 1–95 (MVKLMIRRLS…PTVIDFSRLF (95 aa)). PPR repeat units lie at residues 87-121 (TVID…GIAH), 122-156 (NLYT…GYEP), 157-191 (NTIT…GHKP), 192-226 (DLIT…GCQP), 227-261 (NAVT…NIKL), 262-296 (DAVK…GITT), 297-331 (NIIT…KINP), 332-366 (NVVT…GIAP), 367-401 (DTIT…GCDP), 402-436 (NIRT…GVVA), 437-471 (DTVT…KVPP), 472-506 (NIVT…KMEL), 507-541 (DIGI…GVKP), 542-576 (GVKT…GHAP), and 577-611 (DGWT…GFSV).

The protein belongs to the PPR family. P subfamily.

It localises to the mitochondrion. This is Pentatricopeptide repeat-containing protein At1g12300, mitochondrial from Arabidopsis thaliana (Mouse-ear cress).